The following is a 90-amino-acid chain: Probable Fe(2+)-trafficking protein (90 aa).

It belongs to the Fe(2+)-trafficking protein family.

Its function is as follows. Could be a mediator in iron transactions between iron acquisition and iron-requiring processes, such as synthesis and/or repair of Fe-S clusters in biosynthetic enzymes. In Colwellia psychrerythraea (strain 34H / ATCC BAA-681) (Vibrio psychroerythus), this protein is Probable Fe(2+)-trafficking protein.